Consider the following 212-residue polypeptide: Glycerol-3-phosphate acyltransferase (212 aa).

5 consecutive transmembrane segments (helical) span residues 3–23 (ILLAALIAYLIGSVSFAVIVS), 51–71 (KAAILTLIGDAFKGWIAVWLA), 78–98 (DVAIAWVAIAVFIGHLYPVFF), 115–135 (AVHPVLGLATALTWLIIAFFF), and 139–159 (SLAALVAAVFAPLFDVFLFGT).

It belongs to the PlsY family. As to quaternary structure, probably interacts with PlsX.

It localises to the cell inner membrane. The enzyme catalyses an acyl phosphate + sn-glycerol 3-phosphate = a 1-acyl-sn-glycero-3-phosphate + phosphate. It functions in the pathway lipid metabolism; phospholipid metabolism. Its function is as follows. Catalyzes the transfer of an acyl group from acyl-phosphate (acyl-PO(4)) to glycerol-3-phosphate (G3P) to form lysophosphatidic acid (LPA). This enzyme utilizes acyl-phosphate as fatty acyl donor, but not acyl-CoA or acyl-ACP. This is Glycerol-3-phosphate acyltransferase from Burkholderia multivorans (strain ATCC 17616 / 249).